The primary structure comprises 163 residues: NADH-quinone oxidoreductase subunit I (163 aa).

2 4Fe-4S ferredoxin-type domains span residues Leu53 to Gly83 and Val94 to Asn123. Positions 63, 66, 69, 73, 103, 106, 109, and 113 each coordinate [4Fe-4S] cluster.

This sequence belongs to the complex I 23 kDa subunit family. As to quaternary structure, NDH-1 is composed of 14 different subunits. Subunits NuoA, H, J, K, L, M, N constitute the membrane sector of the complex. The cofactor is [4Fe-4S] cluster.

The protein resides in the cell inner membrane. It catalyses the reaction a quinone + NADH + 5 H(+)(in) = a quinol + NAD(+) + 4 H(+)(out). Its function is as follows. NDH-1 shuttles electrons from NADH, via FMN and iron-sulfur (Fe-S) centers, to quinones in the respiratory chain. The immediate electron acceptor for the enzyme in this species is believed to be ubiquinone. Couples the redox reaction to proton translocation (for every two electrons transferred, four hydrogen ions are translocated across the cytoplasmic membrane), and thus conserves the redox energy in a proton gradient. The sequence is that of NADH-quinone oxidoreductase subunit I from Chelativorans sp. (strain BNC1).